A 475-amino-acid chain; its full sequence is Ankyrin repeat, SAM and basic leucine zipper domain-containing protein 1 (475 aa).

The interval 1–25 is disordered; the sequence is MAAGALRGLPVAGGGESSESEDDGW. Residues S17, S18, and S20 each carry the phosphoserine modification. ANK repeat units follow at residues 45-74, 78-107, 110-144, 148-177, 181-210, and 214-243; these read EKKE…SVDS, YGWT…NASF, DKQT…DPNV, RLMT…EVNT, NGYT…NKML, and DGKM…PLEG. The 63-residue stretch at 272–334 folds into the SAM domain; it reads SYTAFGDLEV…KILAALKELQ (63 aa).

In terms of assembly, interacts with DDX4, PIWIL1, RANBP9 and TDRD1.

The protein localises to the cytoplasm. Functionally, plays a central role during spermatogenesis by repressing transposable elements and preventing their mobilization, which is essential for the germline integrity. Acts via the piRNA metabolic process, which mediates the repression of transposable elements during meiosis by forming complexes composed of piRNAs and Piwi proteins and governs the methylation and subsequent repression of transposons. Its association with pi-bodies suggests a participation in the primary piRNAs metabolic process. Required prior to the pachytene stage to facilitate the production of multiple types of piRNAs, including those associated with repeats involved in the regulation of retrotransposons. May act by mediating protein-protein interactions during germ cell maturation. The chain is Ankyrin repeat, SAM and basic leucine zipper domain-containing protein 1 (ASZ1) from Chlorocebus aethiops (Green monkey).